The chain runs to 1097 residues: DNA-directed RNA polymerase subunit beta (1097 aa).

Residues 1072 to 1097 form a disordered region; it reads QDVNPRRSTPSRPTYESLGVADYDED.

The protein belongs to the RNA polymerase beta chain family. As to quaternary structure, in cyanobacteria the RNAP catalytic core is composed of 2 alpha, 1 beta, 1 beta', 1 gamma and 1 omega subunit. When a sigma factor is associated with the core the holoenzyme is formed, which can initiate transcription.

It catalyses the reaction RNA(n) + a ribonucleoside 5'-triphosphate = RNA(n+1) + diphosphate. Its function is as follows. DNA-dependent RNA polymerase catalyzes the transcription of DNA into RNA using the four ribonucleoside triphosphates as substrates. In Synechococcus sp. (strain CC9902), this protein is DNA-directed RNA polymerase subunit beta.